A 327-amino-acid chain; its full sequence is Undecaprenyl-phosphate 4-deoxy-4-formamido-L-arabinose transferase (327 aa).

The next 2 helical transmembrane spans lie at 233-253 and 268-288; these read ILSL…LLLI and VFTL…GMGL.

It belongs to the glycosyltransferase 2 family.

It localises to the cell inner membrane. It catalyses the reaction UDP-4-deoxy-4-formamido-beta-L-arabinose + di-trans,octa-cis-undecaprenyl phosphate = 4-deoxy-4-formamido-alpha-L-arabinopyranosyl di-trans,octa-cis-undecaprenyl phosphate + UDP. It functions in the pathway glycolipid biosynthesis; 4-amino-4-deoxy-alpha-L-arabinose undecaprenyl phosphate biosynthesis; 4-amino-4-deoxy-alpha-L-arabinose undecaprenyl phosphate from UDP-4-deoxy-4-formamido-beta-L-arabinose and undecaprenyl phosphate: step 1/2. The protein operates within bacterial outer membrane biogenesis; lipopolysaccharide biosynthesis. In terms of biological role, catalyzes the transfer of 4-deoxy-4-formamido-L-arabinose from UDP to undecaprenyl phosphate. The modified arabinose is attached to lipid A and is required for resistance to polymyxin and cationic antimicrobial peptides. This Pectobacterium atrosepticum (strain SCRI 1043 / ATCC BAA-672) (Erwinia carotovora subsp. atroseptica) protein is Undecaprenyl-phosphate 4-deoxy-4-formamido-L-arabinose transferase.